A 212-amino-acid chain; its full sequence is Large ribosomal subunit protein uL3 (212 aa).

An N5-methylglutamine modification is found at glutamine 153.

This sequence belongs to the universal ribosomal protein uL3 family. In terms of assembly, part of the 50S ribosomal subunit. Forms a cluster with proteins L14 and L19. Post-translationally, methylated by PrmB.

Functionally, one of the primary rRNA binding proteins, it binds directly near the 3'-end of the 23S rRNA, where it nucleates assembly of the 50S subunit. This Idiomarina loihiensis (strain ATCC BAA-735 / DSM 15497 / L2-TR) protein is Large ribosomal subunit protein uL3.